The primary structure comprises 502 residues: CBL-interacting serine/threonine-protein kinase 13 (502 aa).

The interval 32–51 is disordered; that stretch reads TNKETSTPESPRSPRTPQGS. Over residues 35 to 48 the composition is skewed to low complexity; sequence ETSTPESPRSPRTP. The 255-residue stretch at 57 to 311 folds into the Protein kinase domain; that stretch reads YEIGKLLGHG…IPEIMKHRWF (255 aa). ATP contacts are provided by residues 63–71 and Lys-86; that span reads LGHGSFAKV. Residue Asp-179 is the Proton acceptor of the active site. The interval 197–226 is activation loop; sequence DFGLSVVSEQLKQEGICQTFCGTPAYLAPE. The residue at position 201 (Ser-201) is a Phosphoserine. Thr-215 bears the Phosphothreonine mark. Positions 331-359 are disordered; the sequence is DDDNDDDDSSSLSSGRSSTASEGDAEFDI. The segment covering 340–352 has biased composition (low complexity); that stretch reads SSLSSGRSSTASE. Residues 366 to 387 form the NAF domain; it reads PRPASLNAFDILSFSDLSGLFE. The segment at 390–419 is PPI; it reads GQGARFVSAAPMTKIISKLEEIAKEVKFMV.

The protein belongs to the protein kinase superfamily. CAMK Ser/Thr protein kinase family. SNF1 subfamily. As to quaternary structure, interacts with CBL2 and CBL3. Mn(2+) serves as cofactor.

It carries out the reaction L-seryl-[protein] + ATP = O-phospho-L-seryl-[protein] + ADP + H(+). It catalyses the reaction L-threonyl-[protein] + ATP = O-phospho-L-threonyl-[protein] + ADP + H(+). Functionally, CIPK serine-threonine protein kinases interact with CBL proteins. Binding of a CBL protein to the regulatory NAF domain of CIPK protein lead to the activation of the kinase in a calcium-dependent manner. The protein is CBL-interacting serine/threonine-protein kinase 13 (CIPK13) of Arabidopsis thaliana (Mouse-ear cress).